A 145-amino-acid polypeptide reads, in one-letter code: Leptin (145 aa).

The cysteines at positions 95 and 145 are disulfide-linked.

Belongs to the leptin family.

It is found in the secreted. In terms of biological role, key player in the regulation of energy balance and body weight control. Once released into the circulation, has central and peripheral effects by binding LEPR, found in many tissues, which results in the activation of several major signaling pathways. The polypeptide is Leptin (LEP) (Meleagris gallopavo (Wild turkey)).